The primary structure comprises 206 residues: Ribosomal RNA small subunit methyltransferase G (206 aa).

S-adenosyl-L-methionine contacts are provided by residues glycine 74, leucine 79, 125 to 126 (VE), and arginine 140.

The protein belongs to the methyltransferase superfamily. RNA methyltransferase RsmG family.

Its subcellular location is the cytoplasm. It carries out the reaction guanosine(527) in 16S rRNA + S-adenosyl-L-methionine = N(7)-methylguanosine(527) in 16S rRNA + S-adenosyl-L-homocysteine. Its function is as follows. Specifically methylates the N7 position of guanine in position 527 of 16S rRNA. The protein is Ribosomal RNA small subunit methyltransferase G of Shewanella oneidensis (strain ATCC 700550 / JCM 31522 / CIP 106686 / LMG 19005 / NCIMB 14063 / MR-1).